A 451-amino-acid chain; its full sequence is Chromosomal replication initiator protein DnaA (451 aa).

The segment at 1–82 is domain I, interacts with DnaA modulators; it reads MENSLWKQCL…RLELQIGSSA (82 aa). A domain II region spans residues 82 to 114; the sequence is AVVAPPRRRQVSVTTPSPSAAADQTPATRSAAS. Positions 85-112 are disordered; the sequence is APPRRRQVSVTTPSPSAAADQTPATRSA. Positions 115 to 331 are domain III, AAA+ region; sequence NLNSNFTFDT…GALRRVVANA (217 aa). Residues glycine 159, glycine 161, lysine 162, and threonine 163 each coordinate ATP. The interval 332-451 is domain IV, binds dsDNA; it reads QFTGQEITVE…YSNLLRTLST (120 aa).

The protein belongs to the DnaA family. In terms of assembly, oligomerizes as a right-handed, spiral filament on DNA at oriC.

It is found in the cytoplasm. In terms of biological role, plays an essential role in the initiation and regulation of chromosomal replication. ATP-DnaA binds to the origin of replication (oriC) to initiate formation of the DNA replication initiation complex once per cell cycle. Binds the DnaA box (a 9 base pair repeat at the origin) and separates the double-stranded (ds)DNA. Forms a right-handed helical filament on oriC DNA; dsDNA binds to the exterior of the filament while single-stranded (ss)DNA is stabiized in the filament's interior. The ATP-DnaA-oriC complex binds and stabilizes one strand of the AT-rich DNA unwinding element (DUE), permitting loading of DNA polymerase. After initiation quickly degrades to an ADP-DnaA complex that is not apt for DNA replication. Binds acidic phospholipids. This is Chromosomal replication initiator protein DnaA from Alkalilimnicola ehrlichii (strain ATCC BAA-1101 / DSM 17681 / MLHE-1).